The sequence spans 312 residues: Aquaglyceroporin-2 (312 aa).

The next 6 helical transmembrane spans lie at 78-98, 104-124, 151-171, 203-223, 239-259, and 286-306; these read FLGN…SLLV, LGLT…SLGI, YIAA…GVFA, GIFY…LCVC, VAIG…SPLA, and YYFW…LFLY.

This sequence belongs to the MIP/aquaporin (TC 1.A.8) family.

The protein resides in the membrane. The catalysed reaction is glycerol(in) = glycerol(out). The enzyme catalyses H2O(in) = H2O(out). It carries out the reaction urea(in) = urea(out). Functionally, mediates water and glycerol transport across cell membranes. Permeable to urea. Permeable to methylamine/methylammonium. Permeable to dihydroxyacetone. The protein is Aquaglyceroporin-2 of Trypanosoma brucei brucei.